An 89-amino-acid chain; its full sequence is Small ribosomal subunit protein uS14A (89 aa).

The protein belongs to the universal ribosomal protein uS14 family. Part of the 30S ribosomal subunit. Contacts proteins S3 and S10.

Binds 16S rRNA, required for the assembly of 30S particles and may also be responsible for determining the conformation of the 16S rRNA at the A site. The polypeptide is Small ribosomal subunit protein uS14A (Staphylococcus aureus (strain Newman)).